Reading from the N-terminus, the 2559-residue chain is Ubiquitin carboxyl-terminal hydrolase 9X (2559 aa).

Polar residues predominate over residues 1 to 44; the sequence is MTATTRGSPVGGNDNQGQAPDGQSQPPLQQNQTSSPDSSNENSP. Residues 1–64 are disordered; that stretch reads MTATTRGSPV…DAPPQIEDEE (64 aa). A phosphoserine mark is found at serine 374, serine 375, and serine 588. The tract at residues 967–999 is disordered; it reads QISSNMPSSPDSSSDSSTGSPGNHGNHYSDGPN. A compositionally biased stretch (low complexity) spans 969-989; sequence SSNMPSSPDSSSDSSTGSPGN. Residues 1557–1956 form the USP domain; that stretch reads VGLKNAGATC…NAYILFYERM (400 aa). The Nucleophile role is filled by cysteine 1566. The tract at residues 1592 to 1633 is disordered; that stretch reads GSDVDDDMSGDEKQDNESNVDPRDDVFGYPQQFEDKPPLSKT. The residue at position 1600 (serine 1600) is a Phosphoserine. Basic and acidic residues-rich tracts occupy residues 1601–1617 and 1624–1633; these read GDEK…RDDV and FEDKPPLSKT. 4 residues coordinate Zn(2+): cysteine 1727, histidine 1729, cysteine 1771, and cysteine 1774. Histidine 1879 serves as the catalytic Proton acceptor. Phosphoserine is present on serine 2443. Positions 2475 to 2484 are enriched in acidic residues; it reads PEEEPDDQDA. The segment at 2475 to 2559 is disordered; that stretch reads PEEEPDDQDA…QTKGSVKCTY (85 aa). Polar residues-rich tracts occupy residues 2503-2513 and 2527-2537; these read PGSQYQQNNHV and NNPQRTGQRAQ. Tyrosine 2540 bears the Phosphotyrosine mark. Serine 2547 is subject to Phosphoserine. A Phosphothreonine modification is found at threonine 2551.

This sequence belongs to the peptidase C19 family. As to quaternary structure, interacts with SMAD4, MARK4, NUAK1 and BIRC5/survivin. Interacts with DCX. Interacts with OTUD4 and USP7; the interaction is direct. In terms of tissue distribution, highest levels in liver and brain with expression also detected in heart, muscle, spleen and kidney (at protein leve). Ubiquitously expressed in adult tissues.

It localises to the cytoplasm. Its subcellular location is the cytosol. The protein resides in the cell projection. It is found in the growth cone. The protein localises to the cytoskeleton. It localises to the cilium axoneme. The enzyme catalyses Thiol-dependent hydrolysis of ester, thioester, amide, peptide and isopeptide bonds formed by the C-terminal Gly of ubiquitin (a 76-residue protein attached to proteins as an intracellular targeting signal).. In terms of biological role, deubiquitinase involved both in the processing of ubiquitin precursors and of ubiquitinated proteins. May therefore play an important regulatory role at the level of protein turnover by preventing degradation of proteins through the removal of conjugated ubiquitin. Specifically hydrolyzes 'Lys-11'-, followed by 'Lys-63'-, 'Lys-48'- and 'Lys-6'-linked polyubiquitins chains. Essential component of TGF-beta/BMP signaling cascade. Specifically deubiquitinates monoubiquitinated SMAD4, opposing the activity of E3 ubiquitin-protein ligase TRIM33. Deubiquitinates alkylation repair enzyme ALKBH3. OTUD4 recruits USP7 and USP9X to stabilize ALKBH3, thereby promoting the repair of alkylated DNA lesions. Deubiquitinates RNA demethylase enzyme ALKBH5, promoting its stability. Deubiquitinates mTORC2 complex component RICTOR at 'Lys-294' by removing 'Lys-63'-linked polyubiquitin chains, stabilizing RICTOR and enhancing its binding to MTOR, thus promoting mTORC2 complex assembly. Regulates chromosome alignment and segregation in mitosis by regulating the localization of BIRC5/survivin to mitotic centromeres. Involved in axonal growth and neuronal cell migration. Regulates cellular clock function by enhancing the protein stability and transcriptional activity of the core circadian protein BMAL1 via its deubiquitinating activity. Acts as a regulator of peroxisome import by mediating deubiquitination of PEX5: specifically deubiquitinates PEX5 monoubiquitinated at 'Cys-11' following its retrotranslocation into the cytosol, resetting PEX5 for a subsequent import cycle. Deubiquitinates PEG10. Inhibits the activation of the Hippo signaling pathway via deubiquitination of AMOTL2 at 'Lys-337' and 'Lys-404' which prohibits its interaction with and activation of LATS2. Loss of LATS2 activation and subsequent loss of YAP1 phosphorylation results in an increase in YAP1-driven transcription of target genes. The polypeptide is Ubiquitin carboxyl-terminal hydrolase 9X (Mus musculus (Mouse)).